Here is a 280-residue protein sequence, read N- to C-terminus: Bifunctional protein FolD (280 aa).

Residues 159 to 161, serine 184, and isoleucine 225 each bind NADP(+); that span reads GRS.

Belongs to the tetrahydrofolate dehydrogenase/cyclohydrolase family. Homodimer.

It carries out the reaction (6R)-5,10-methylene-5,6,7,8-tetrahydrofolate + NADP(+) = (6R)-5,10-methenyltetrahydrofolate + NADPH. The enzyme catalyses (6R)-5,10-methenyltetrahydrofolate + H2O = (6R)-10-formyltetrahydrofolate + H(+). Its pathway is one-carbon metabolism; tetrahydrofolate interconversion. Catalyzes the oxidation of 5,10-methylenetetrahydrofolate to 5,10-methenyltetrahydrofolate and then the hydrolysis of 5,10-methenyltetrahydrofolate to 10-formyltetrahydrofolate. This is Bifunctional protein FolD from Methanosphaerula palustris (strain ATCC BAA-1556 / DSM 19958 / E1-9c).